The chain runs to 182 residues: Large ribosomal subunit protein uL5 (182 aa).

It belongs to the universal ribosomal protein uL5 family. As to quaternary structure, part of the 50S ribosomal subunit; part of the 5S rRNA/L5/L18/L25 subcomplex. Contacts the 5S rRNA and the P site tRNA. Forms a bridge to the 30S subunit in the 70S ribosome.

This is one of the proteins that bind and probably mediate the attachment of the 5S RNA into the large ribosomal subunit, where it forms part of the central protuberance. In the 70S ribosome it contacts protein S13 of the 30S subunit (bridge B1b), connecting the 2 subunits; this bridge is implicated in subunit movement. Contacts the P site tRNA; the 5S rRNA and some of its associated proteins might help stabilize positioning of ribosome-bound tRNAs. The chain is Large ribosomal subunit protein uL5 from Coxiella burnetii (strain CbuG_Q212) (Coxiella burnetii (strain Q212)).